A 213-amino-acid polypeptide reads, in one-letter code: Cytochrome b6 (213 aa).

A helical membrane pass occupies residues 30–50 (IFYCLGGLTLLAFLVQCVTGL). Cys33 contacts heme c. Heme b contacts are provided by His84 and His98. Transmembrane regions (helical) follow at residues 88–108 (ANLMILLVFLHMLRVYYTGSF), 114–134 (LNWLAGCFLLVLSLGLAFTGY), and 184–204 (LHVMILPLVTIGFLVAHFIMI). Heme b-binding residues include His185 and His200.

It belongs to the cytochrome b family. PetB subfamily. In terms of assembly, the subunits of the cytochrome bc complex are a Rieske Fe-S protein (PetC), cytochrome b6 (PetB), subunit IV (PetD), and a diheme cytochrome c (PetX). It depends on heme b as a cofactor. The cofactor is heme c.

It is found in the cell membrane. Its function is as follows. Component of the cytochrome bc complex which donates electrons to the photosynthetic reaction center. The sequence is that of Cytochrome b6 from Heliobacterium mobile (Heliobacillus mobilis).